A 228-amino-acid chain; its full sequence is ATP synthase F(0) complex subunit a (228 aa).

A run of 5 helical transmembrane segments spans residues 13 to 33 (NILA…IFPM), 69 to 89 (WALI…LGLL), 98 to 118 (QLSM…LIGL), 139 to 159 (IPTL…ALGV), and 194 to 214 (ILLF…ALVF).

It belongs to the ATPase A chain family. In terms of assembly, component of the ATP synthase complex composed at least of ATP5F1A/subunit alpha, ATP5F1B/subunit beta, ATP5MC1/subunit c (homooctomer), MT-ATP6/subunit a, MT-ATP8/subunit 8, ATP5ME/subunit e, ATP5MF/subunit f, ATP5MG/subunit g, ATP5MK/subunit k, ATP5MJ/subunit j, ATP5F1C/subunit gamma, ATP5F1D/subunit delta, ATP5F1E/subunit epsilon, ATP5PF/subunit F6, ATP5PB/subunit b, ATP5PD/subunit d, ATP5PO/subunit OSCP. ATP synthase complex consists of a soluble F(1) head domain (subunits alpha(3) and beta(3)) - the catalytic core - and a membrane F(0) domain - the membrane proton channel (subunits c, a, 8, e, f, g, k and j). These two domains are linked by a central stalk (subunits gamma, delta, and epsilon) rotating inside the F1 region and a stationary peripheral stalk (subunits F6, b, d, and OSCP). Interacts with DNAJC30; interaction is direct.

The protein resides in the mitochondrion inner membrane. It catalyses the reaction H(+)(in) = H(+)(out). Subunit a, of the mitochondrial membrane ATP synthase complex (F(1)F(0) ATP synthase or Complex V) that produces ATP from ADP in the presence of a proton gradient across the membrane which is generated by electron transport complexes of the respiratory chain. ATP synthase complex consist of a soluble F(1) head domain - the catalytic core - and a membrane F(1) domain - the membrane proton channel. These two domains are linked by a central stalk rotating inside the F(1) region and a stationary peripheral stalk. During catalysis, ATP synthesis in the catalytic domain of F(1) is coupled via a rotary mechanism of the central stalk subunits to proton translocation. With the subunit c (ATP5MC1), forms the proton-conducting channel in the F(0) domain, that contains two crucial half-channels (inlet and outlet) that facilitate proton movement from the mitochondrial intermembrane space (IMS) into the matrix. Protons are taken up via the inlet half-channel and released through the outlet half-channel, following a Grotthuss mechanism. In Pelomedusa subrufa (African side-necked turtle), this protein is ATP synthase F(0) complex subunit a.